A 1228-amino-acid chain; its full sequence is Nitrate reductase alpha chain (1228 aa).

One can recognise a 4Fe-4S Mo/W bis-MGD-type domain in the interval 47 to 111 (DKVVRSTHGV…SFSWYIYSPL (65 aa)). Residues His-54, Cys-58, Cys-62, and Cys-97 each coordinate [4Fe-4S] cluster. A Mo-bis(molybdopterin guanine dinucleotide)-binding site is contributed by Asp-227.

This sequence belongs to the prokaryotic molybdopterin-containing oxidoreductase family. [4Fe-4S] cluster serves as cofactor. Requires Mo-bis(molybdopterin guanine dinucleotide) as cofactor.

The protein resides in the cell membrane. It carries out the reaction nitrate + a quinol = a quinone + nitrite + H2O. The alpha chain is the actual site of nitrate reduction. This Bacillus subtilis (strain 168) protein is Nitrate reductase alpha chain (narG).